Consider the following 343-residue polypeptide: Outer envelope pore protein 37, chloroplastic (343 aa).

Composition is skewed to polar residues over residues 1–11 (MADPSSQNPNL) and 23–43 (THQIQSGTSELSPPSRPPCST). The tract at residues 1 to 43 (MADPSSQNPNLATPPPPSSPSPTHQIQSGTSELSPPSRPPCST) is disordered. The transit peptide at 1 to 73 (MADPSSQNPN…DSLLFLNKVS (73 aa)) directs the protein to the chloroplast. Over 74–76 (CKL) the chain is Cytoplasmic. A beta stranded membrane pass occupies residues 77–86 (FDNLAKLKLS). Residues 87-103 (FQNNSQREISQPQVSFT) are Chloroplast intermembrane-facing. A beta stranded membrane pass occupies residues 104 to 113 (SKHVSVLYDV). The Cytoplasmic segment spans residues 114 to 129 (EEKNTFIKSTLDVHPR). The chain crosses the membrane as a beta stranded span at residues 130–137 (LQLRALHN). The Chloroplast intermembrane portion of the chain corresponds to 138–154 (VKAQQGEVAMEANLTEP). The chain crosses the membrane as a beta stranded span at residues 155 to 164 (GYSLELSSPV). Residues 165 to 169 (PIGYP) lie on the Cytoplasmic side of the membrane. A beta stranded transmembrane segment spans residues 170–178 (RATLKFPLG). Over 179-219 (EISLQEKDEEEEEKQKRTLSVNGILKRQVMNGVCTALYTDE) the chain is Chloroplast intermembrane. A beta stranded membrane pass occupies residues 220 to 228 (ELRLRYAYK). Residues 229–230 (DD) are Cytoplasmic-facing. The beta stranded transmembrane segment at 231–240 (ALSFIPSISL) threads the bilayer. A topological domain (chloroplast intermembrane) is located at residue Pro241. Residues 242–250 (SNAASFAFK) form a beta stranded membrane-spanning segment. Over 251–257 (RRFSPSD) the chain is Cytoplasmic. Residues 258 to 267 (KLSYWYNFDS) form a beta stranded membrane-spanning segment. Residues 268-269 (NM) are Chloroplast intermembrane-facing. Residues 270-279 (WSAVYKRTYG) traverse the membrane as a beta stranded segment. Topologically, residues 280-286 (KDYKLKA) are cytoplasmic. The beta stranded transmembrane segment at 287–296 (GYDSDVRLGW) threads the bilayer. At 297–316 (ASLWVGDEAGKVKTTPMKMK) the chain is on the chloroplast intermembrane side. A beta stranded membrane pass occupies residues 317–326 (VQFMLQVPQD). Residues 327–343 (DIKSSVLMFRVKKRWDI) lie on the Cytoplasmic side of the membrane.

This sequence belongs to the plastid outer envelope porin OEP37 (TC 1.B.47) family. In terms of assembly, forms an hourglass-shaped multimeric complex. Ubiquitously expressed at low levels. Mostly present in cotyledons, and accumulates in seedlings and embryos.

Its subcellular location is the plastid. The protein resides in the chloroplast outer membrane. Its function is as follows. Voltage-dependent peptide-sensitive high conductance rectifying cation channel with a strong affinity for TIC32 that is imported into the chloroplast. Conductance is pH-dependent decreasing with decreasing pH values. This Arabidopsis thaliana (Mouse-ear cress) protein is Outer envelope pore protein 37, chloroplastic (OEP37).